Consider the following 294-residue polypeptide: tRNA dimethylallyltransferase (294 aa).

An ATP-binding site is contributed by 11-18 (GPTAVGKT). Residue 13–18 (TAVGKT) coordinates substrate. Residues 36 to 39 (DSQQ) form an interaction with substrate tRNA region.

Belongs to the IPP transferase family. As to quaternary structure, monomer. Mg(2+) serves as cofactor.

The catalysed reaction is adenosine(37) in tRNA + dimethylallyl diphosphate = N(6)-dimethylallyladenosine(37) in tRNA + diphosphate. In terms of biological role, catalyzes the transfer of a dimethylallyl group onto the adenine at position 37 in tRNAs that read codons beginning with uridine, leading to the formation of N6-(dimethylallyl)adenosine (i(6)A). In Lactococcus lactis subsp. lactis (strain IL1403) (Streptococcus lactis), this protein is tRNA dimethylallyltransferase.